A 133-amino-acid chain; its full sequence is Protein OPG104 (133 aa).

Residues 1–111 are Virion surface-facing; that stretch reads MTDEQIYAFC…RYLNQEIRYP (111 aa). The chain crosses the membrane as a helical; Signal-anchor span at residues 112–132; that stretch reads IIDIKWLPIGLLALAILILAF.

Belongs to the orthopoxvirus OPG104 family. Part of a stable entry-fusion complex (EFC) which is at least composed of proteins OPG143, OPG147, OPG155, OPG086, OPG094, OPG107, OPG104, and OPG099. Formation of the viral membrane is necessary for the assembly of the complex.

The protein resides in the virion membrane. Its function is as follows. Envelope protein part of the entry-fusion complex responsible for the virus membrane fusion with host cell membrane during virus entry. Also plays a role in cell-cell fusion (syncytium formation). This chain is Protein OPG104 (OPG104), found in Homo sapiens (Human).